The following is a 20-amino-acid chain: Succinate--CoA ligase [ADP-forming] subunit beta, mitochondrial (20 aa).

The ATP-grasp domain occupies 8-20 (SMELLQEAGVSIP).

The protein belongs to the succinate/malate CoA ligase beta subunit family. ATP-specific subunit beta subfamily. Heterodimer of an alpha and a beta subunit. The beta subunit determines specificity for ATP. Interacts with ALAS2.

The protein localises to the mitochondrion. The enzyme catalyses succinate + ATP + CoA = succinyl-CoA + ADP + phosphate. Its pathway is carbohydrate metabolism; tricarboxylic acid cycle; succinate from succinyl-CoA (ligase route): step 1/1. Its function is as follows. ATP-specific succinyl-CoA synthetase functions in the citric acid cycle (TCA), coupling the hydrolysis of succinyl-CoA to the synthesis of ATP and thus represents the only step of substrate-level phosphorylation in the TCA. The beta subunit provides nucleotide specificity of the enzyme and binds the substrate succinate, while the binding sites for coenzyme A and phosphate are found in the alpha subunit. The polypeptide is Succinate--CoA ligase [ADP-forming] subunit beta, mitochondrial (Canis lupus familiaris (Dog)).